Here is a 148-residue protein sequence, read N- to C-terminus: uncharacterized protein (148 aa).

An HTH asnC-type domain is found at 4–65 (LDKVDIQLVK…IPDLDKLGYM (62 aa)). The segment at residues 23 to 42 (YRELAELMNTTRQRIARRIT) is a DNA-binding region (H-T-H motif).

This is an uncharacterized protein from Pyrococcus abyssi (strain GE5 / Orsay).